Consider the following 89-residue polypeptide: Toxin To14 (89 aa).

Residues 1-19 (MNCLMLIFVVFLLAFGVEC) form the signal peptide. The 65-residue stretch at 21–85 (KDDYPVDTAK…SPTKTSGRCN (65 aa)) folds into the LCN-type CS-alpha/beta domain. 4 disulfide bridges follow: Cys33–Cys84, Cys37–Cys60, Cys46–Cys67, and Cys50–Cys69.

As to expression, expressed by the venom gland.

It is found in the secreted. Inhibits voltage-gated sodium channels (Nav). This is Toxin To14 from Tityus obscurus (Amazonian scorpion).